Reading from the N-terminus, the 329-residue chain is Cathepsin K (329 aa).

Positions 1 to 15 (MWGLTVLLLPVVSFA) are cleaved as a signal peptide. Residues 16-114 (LYPEEILDTQ…TLYIPDWEGR (99 aa)) constitute a propeptide, activation peptide. N-linked (GlcNAc...) asparagine glycosylation occurs at Asn-103. 3 disulfides stabilise this stretch: Cys-136-Cys-177, Cys-170-Cys-210, and Cys-269-Cys-318. The active site involves Cys-139. Residues His-276 and Asn-296 contribute to the active site.

This sequence belongs to the peptidase C1 family.

The protein resides in the lysosome. The protein localises to the secreted. It localises to the apical cell membrane. The catalysed reaction is Broad proteolytic activity. With small-molecule substrates and inhibitors, the major determinant of specificity is P2, which is preferably Leu, Met &gt; Phe, and not Arg.. In terms of biological role, thiol protease involved in osteoclastic bone resorption and may participate partially in the disorder of bone remodeling. Displays potent endoprotease activity against fibrinogen at acid pH. May play an important role in extracellular matrix degradation. Involved in the release of thyroid hormone thyroxine (T4) by limited proteolysis of TG/thyroglobulin in the thyroid follicle lumen. This is Cathepsin K (CTSK) from Bos taurus (Bovine).